Reading from the N-terminus, the 621-residue chain is TOX high mobility group box family member 4 (621 aa).

Disordered stretches follow at residues 153-227 (LGLS…QKPV) and 305-333 (LDPA…ASIE). The residue at position 176 (threonine 176) is a Phosphothreonine. A phosphoserine mark is found at serine 178, serine 181, and serine 182. The span at 183–193 (LHEDGVEDFRR) shows a compositional bias: basic and acidic residues. The segment covering 208 to 218 (KQKAPKKRKKK) has biased composition (basic residues). The Nuclear localization signal signature appears at 213–218 (KKRKKK). The HMG box DNA-binding region spans 223–291 (PQKPVSAYAL…EYLKALAAYK (69 aa)). Over residues 307-319 (PAPPSQTPSPPPM) the composition is skewed to pro residues. Threonine 313 carries the post-translational modification Phosphothreonine. Serine 315 is subject to Phosphoserine. Low complexity predominate over residues 320–333 (ATVDPASPAPASIE). At arginine 481 the chain carries Asymmetric dimethylarginine. The segment at 510–529 (PTVESSPERPMNNSPEAHTV) is disordered. A phosphoserine mark is found at serine 533, serine 550, serine 552, serine 560, serine 562, and serine 567.

As to quaternary structure, component of the PNUTS-PP1 phosphatase complex, composed of PPP1R10/PNUTS, TOX4, WDR82 and PPP1CA or PPP1CB or PPP1CC. Interacts with PPP1R10/PNUTS. Interacts with FOXO1 and CREB1 (increased by cAMP); FOXO1 and CREB1 are required for full induction of TOX4-dependent activity and the interactions are inhibited by insulin.

It localises to the nucleus. Its subcellular location is the chromosome. Its activity is regulated as follows. In liver, recruited to target gene promoters following treatment with dexamethasone and cAMP. Binding is decreased in presence of insulin. Functionally, transcription factor that modulates cell fate reprogramming from the somatic state to the pluripotent and neuronal fate. In liver, controls the expression of hormone-regulated gluconeogenic genes such as G6PC1 and PCK1. This regulation is independent of the insulin receptor activation. Also acts as a regulatory component of protein phosphatase 1 (PP1) complexes. Component of the PNUTS-PP1 protein phosphatase complex, a PP1 complex that regulates RNA polymerase II transcription pause-release. PNUTS-PP1 also plays a role in the control of chromatin structure and cell cycle progression during the transition from mitosis into interphase. In Pongo abelii (Sumatran orangutan), this protein is TOX high mobility group box family member 4 (TOX4).